A 395-amino-acid chain; its full sequence is Nickel and cobalt resistance protein CnrB (395 aa).

The chain crosses the membrane as a helical span at residues Met13–Val33. Residues Glu35 to Lys55 are disordered. Positions Ser37–Gln50 are enriched in polar residues. The stretch at Ala140–Thr193 forms a coiled coil.

It belongs to the membrane fusion protein (MFP) (TC 8.A.1) family.

Its subcellular location is the cell inner membrane. In terms of biological role, the products of the genes cnrA, cnrB, and cnrC are likely to form a membrane-bound protein complex catalyzing an energy-dependent efflux of Ni(2+) and Co(2+). The mechanism of action of the CnrCBA complex may be that of a proton/cation antiporter. The chain is Nickel and cobalt resistance protein CnrB (cnrB) from Cupriavidus metallidurans (strain ATCC 43123 / DSM 2839 / NBRC 102507 / CH34) (Ralstonia metallidurans).